Consider the following 290-residue polypeptide: Shikimate dehydrogenase (NADP(+)) (290 aa).

Residues 24-26 (SKS) and threonine 71 each bind shikimate. The Proton acceptor role is filled by lysine 75. Positions 96 and 111 each coordinate shikimate. NADP(+) contacts are provided by residues 135–139 (GAGGA), 159–164 (NRTKQR), and isoleucine 228. Shikimate is bound at residue tyrosine 230. Glycine 251 provides a ligand contact to NADP(+).

Belongs to the shikimate dehydrogenase family. In terms of assembly, homodimer.

The enzyme catalyses shikimate + NADP(+) = 3-dehydroshikimate + NADPH + H(+). Its pathway is metabolic intermediate biosynthesis; chorismate biosynthesis; chorismate from D-erythrose 4-phosphate and phosphoenolpyruvate: step 4/7. Involved in the biosynthesis of the chorismate, which leads to the biosynthesis of aromatic amino acids. Catalyzes the reversible NADPH linked reduction of 3-dehydroshikimate (DHSA) to yield shikimate (SA). This Bartonella tribocorum (strain CIP 105476 / IBS 506) protein is Shikimate dehydrogenase (NADP(+)).